The primary structure comprises 77 residues: Large ribosomal subunit protein uL29 (77 aa).

It belongs to the universal ribosomal protein uL29 family.

This chain is Large ribosomal subunit protein uL29, found in Gluconobacter oxydans (strain 621H) (Gluconobacter suboxydans).